A 320-amino-acid polypeptide reads, in one-letter code: ATP-dependent 6-phosphofructokinase (320 aa).

Residue Gly12 participates in ATP binding. ADP contacts are provided by residues 22–26 and 55–60; these read RGVVR and RYSVSD. ATP is bound by residues 73-74 and 103-106; these read RF and GDGS. Asp104 contributes to the Mg(2+) binding site. 126-128 serves as a coordination point for substrate; the sequence is TID. The Proton acceptor role is filled by Asp128. Arg155 is an ADP binding site. Substrate is bound by residues Arg163 and 170-172; that span reads MGR. ADP contacts are provided by residues 186 to 188, Lys212, and 214 to 216; these read GCE and KKH. Substrate is bound by residues Glu223, Arg244, and 250–253; that span reads HIQR.

Belongs to the phosphofructokinase type A (PFKA) family. ATP-dependent PFK group I subfamily. Prokaryotic clade 'B1' sub-subfamily. Homotetramer. The cofactor is Mg(2+).

The protein resides in the cytoplasm. It catalyses the reaction beta-D-fructose 6-phosphate + ATP = beta-D-fructose 1,6-bisphosphate + ADP + H(+). It participates in carbohydrate degradation; glycolysis; D-glyceraldehyde 3-phosphate and glycerone phosphate from D-glucose: step 3/4. With respect to regulation, allosterically activated by ADP and other diphosphonucleosides, and allosterically inhibited by phosphoenolpyruvate. In terms of biological role, catalyzes the phosphorylation of D-fructose 6-phosphate to fructose 1,6-bisphosphate by ATP, the first committing step of glycolysis. The sequence is that of ATP-dependent 6-phosphofructokinase from Buchnera aphidicola subsp. Acyrthosiphon pisum (strain 5A).